Consider the following 1146-residue polypeptide: ATP-dependent helicase/deoxyribonuclease subunit B (1146 aa).

The UvrD-like helicase ATP-binding domain maps to 1 to 280 (MSLRFIYGRA…LNSKPLFRFS (280 aa)). An ATP-binding site is contributed by 8–15 (GRAGSGKT). In terms of domain architecture, UvrD-like helicase C-terminal spans 276–584 (LFRFSQSPEL…LVGSLERSRS (309 aa)). 4 residues coordinate [4Fe-4S] cluster: cysteine 786, cysteine 1105, cysteine 1108, and cysteine 1114.

It belongs to the helicase family. AddB/RexB type 1 subfamily. Heterodimer of AddA and AddB. Requires Mg(2+) as cofactor. [4Fe-4S] cluster serves as cofactor.

Its function is as follows. The heterodimer acts as both an ATP-dependent DNA helicase and an ATP-dependent, dual-direction single-stranded exonuclease. Recognizes the chi site generating a DNA molecule suitable for the initiation of homologous recombination. The AddB subunit has 5' -&gt; 3' nuclease activity but not helicase activity. This chain is ATP-dependent helicase/deoxyribonuclease subunit B, found in Acetivibrio thermocellus (strain ATCC 27405 / DSM 1237 / JCM 9322 / NBRC 103400 / NCIMB 10682 / NRRL B-4536 / VPI 7372) (Clostridium thermocellum).